The primary structure comprises 146 residues: MKIYVDADACPVKDVIIFEATKAEIPVTLVTSFSHYSNAEQPKGVETIYVDSGADAADYRIMQLAQKEDLIVTQDYGLASLALAKGCIVLHHKGYKYTNENIEQLLQTRYLSAMVRKSGKRTKGPKPFTAEDKEKFRALFKSMIAL.

It belongs to the UPF0178 family.

In Bacillus cereus (strain AH820), this protein is UPF0178 protein BCAH820_3075.